A 477-amino-acid polypeptide reads, in one-letter code: Ketoisovalerate oxidoreductase subunit VorA (477 aa).

As to quaternary structure, heterotrimer of the VorA, VorB and VorC subunits.

It catalyses the reaction 3-methyl-2-oxobutanoate + 2 oxidized [2Fe-2S]-[ferredoxin] + CoA = 2-methylpropanoyl-CoA + 2 reduced [2Fe-2S]-[ferredoxin] + CO2 + H(+). This Methanothermobacter thermautotrophicus (strain ATCC 29096 / DSM 1053 / JCM 10044 / NBRC 100330 / Delta H) (Methanobacterium thermoautotrophicum) protein is Ketoisovalerate oxidoreductase subunit VorA (vorA).